The primary structure comprises 271 residues: MSIKLIAVDMDGTFLSDQKTYNRERFMAQYQQMKAQGIRFVVASGNQYYQLISFFPEIANEIAFVAENGGWVVSEGKDVFNGELSKDAFATVVEHLLTRPEVEIIACGKNSAYTLKKYDDAMKTVAEMYYHRLEYVDNFDNLEDIFFKFGLNLSDELIPQVQKALHEAIGDIMVSVHTGNGSIDLIIPGVHKANGLRQLQKLWGIDDSEVVVFGDGGNDIEMLRQAGFSFAMENAGSAVVAAAKYRAGSNNREGVLDVIDKVLKHEAPFDQ.

Catalysis depends on D9, which acts as the Nucleophile. D9 provides a ligand contact to Mg(2+). M10 lines the phosphate pocket. Residue D11 participates in Mg(2+) binding. Phosphate-binding positions include 44–45 and K192; that span reads SG. Mg(2+) is bound at residue D215. N218 is a binding site for phosphate.

It belongs to the HAD-like hydrolase superfamily. Cof family. It depends on Mg(2+) as a cofactor. Mn(2+) is required as a cofactor. Co(2+) serves as cofactor. Requires Zn(2+) as cofactor.

The catalysed reaction is 5-amino-6-(5-phospho-D-ribitylamino)uracil + H2O = 5-amino-6-(D-ribitylamino)uracil + phosphate. The protein operates within cofactor biosynthesis; riboflavin biosynthesis; 5-amino-6-(D-ribitylamino)uracil from GTP: step 4/4. Functionally, catalyzes the dephosphorylation of 5-amino-6-(5-phospho-D-ribitylamino)uracil, and thus could be involved in the riboflavin biosynthesis pathway. Is also able to dephosphorylate flavin mononucleotide (FMN), erythrose 4-phosphate and other phosphoric acid esters. The sequence is that of 5-amino-6-(5-phospho-D-ribitylamino)uracil phosphatase YbjI (ybjI) from Escherichia coli (strain K12).